The primary structure comprises 213 residues: Octanoyltransferase (213 aa).

Residues 32 to 207 form the BPL/LPL catalytic domain; sequence ENSHDEIWLV…NILALLNNPP (176 aa). Substrate contacts are provided by residues 71–78, 138–140, and 151–153; these read RGGQVTYH, SLG, and GLA. Catalysis depends on C169, which acts as the Acyl-thioester intermediate.

This sequence belongs to the LipB family.

It localises to the cytoplasm. It carries out the reaction octanoyl-[ACP] + L-lysyl-[protein] = N(6)-octanoyl-L-lysyl-[protein] + holo-[ACP] + H(+). It functions in the pathway protein modification; protein lipoylation via endogenous pathway; protein N(6)-(lipoyl)lysine from octanoyl-[acyl-carrier-protein]: step 1/2. Catalyzes the transfer of endogenously produced octanoic acid from octanoyl-acyl-carrier-protein onto the lipoyl domains of lipoate-dependent enzymes. Lipoyl-ACP can also act as a substrate although octanoyl-ACP is likely to be the physiological substrate. The polypeptide is Octanoyltransferase (Salmonella typhi).